Here is a 349-residue protein sequence, read N- to C-terminus: MPMPPDDSALSLLPDHPLAAHNTFGIDATARFAARITHAAQFAALHRDPRVAHLPQLVLGGGSNVVFTRDFDGIVLLDEIAGRRVVREDDDAWYVEAGGGETWHAFVAWTLEHGMPGLENLALIPGTVGAAPIQNIGAYGLEMKTYFDSLVAVELATGRSERFDAARCAFGYRDSFFKREGRGRFAIVAVTFRLPKRWTPRLGYADVTRELDARGIAPEAATPRDVFDAVVAIRRAKLPDPLELGNAGSFFKNPVIDAARFDALRARVPDVVSYPQPGGQVKLAAGWLIDRCGWKGRALGAAAVHDRQALVLVNRGGATGADVLALARAIQDDVRKQFGVELEPEPVCV.

The 174-residue stretch at 24–197 folds into the FAD-binding PCMH-type domain; sequence FGIDATARFA…VAVTFRLPKR (174 aa). The active site involves R173. Residue S249 is the Proton donor of the active site. E345 is a catalytic residue.

It belongs to the MurB family. FAD is required as a cofactor.

Its subcellular location is the cytoplasm. It catalyses the reaction UDP-N-acetyl-alpha-D-muramate + NADP(+) = UDP-N-acetyl-3-O-(1-carboxyvinyl)-alpha-D-glucosamine + NADPH + H(+). It functions in the pathway cell wall biogenesis; peptidoglycan biosynthesis. Cell wall formation. In Burkholderia ambifaria (strain ATCC BAA-244 / DSM 16087 / CCUG 44356 / LMG 19182 / AMMD) (Burkholderia cepacia (strain AMMD)), this protein is UDP-N-acetylenolpyruvoylglucosamine reductase.